The chain runs to 141 residues: Protein Turandot Z (141 aa).

Residues 1 to 23 (MYFAIRLSFVLAVLFCLTGNGNA) form the signal peptide.

Belongs to the Turandot family.

The protein resides in the secreted. Its function is as follows. A humoral factor that may play a role in stress tolerance. This Drosophila yakuba (Fruit fly) protein is Protein Turandot Z.